The primary structure comprises 259 residues: Thiazole synthase (259 aa).

The active-site Schiff-base intermediate with DXP is the K99. Residues G160, A187–G188, and N209–T210 contribute to the 1-deoxy-D-xylulose 5-phosphate site.

The protein belongs to the ThiG family. In terms of assembly, homotetramer. Forms heterodimers with either ThiH or ThiS.

It localises to the cytoplasm. The catalysed reaction is [ThiS sulfur-carrier protein]-C-terminal-Gly-aminoethanethioate + 2-iminoacetate + 1-deoxy-D-xylulose 5-phosphate = [ThiS sulfur-carrier protein]-C-terminal Gly-Gly + 2-[(2R,5Z)-2-carboxy-4-methylthiazol-5(2H)-ylidene]ethyl phosphate + 2 H2O + H(+). It functions in the pathway cofactor biosynthesis; thiamine diphosphate biosynthesis. Functionally, catalyzes the rearrangement of 1-deoxy-D-xylulose 5-phosphate (DXP) to produce the thiazole phosphate moiety of thiamine. Sulfur is provided by the thiocarboxylate moiety of the carrier protein ThiS. In vitro, sulfur can be provided by H(2)S. The chain is Thiazole synthase from Solibacter usitatus (strain Ellin6076).